The sequence spans 304 residues: ATP phosphoribosyltransferase (304 aa).

This sequence belongs to the ATP phosphoribosyltransferase family. Long subfamily. The cofactor is Mg(2+).

The protein resides in the cytoplasm. The enzyme catalyses 1-(5-phospho-beta-D-ribosyl)-ATP + diphosphate = 5-phospho-alpha-D-ribose 1-diphosphate + ATP. It participates in amino-acid biosynthesis; L-histidine biosynthesis; L-histidine from 5-phospho-alpha-D-ribose 1-diphosphate: step 1/9. Feedback inhibited by histidine. In terms of biological role, catalyzes the condensation of ATP and 5-phosphoribose 1-diphosphate to form N'-(5'-phosphoribosyl)-ATP (PR-ATP). Has a crucial role in the pathway because the rate of histidine biosynthesis seems to be controlled primarily by regulation of HisG enzymatic activity. The sequence is that of ATP phosphoribosyltransferase from Xanthomonas euvesicatoria pv. vesicatoria (strain 85-10) (Xanthomonas campestris pv. vesicatoria).